A 622-amino-acid polypeptide reads, in one-letter code: Probable potassium transport system protein Kup 1 (622 aa).

Transmembrane regions (helical) follow at residues 11–31 (LTLG…LYAV), 50–70 (ILSI…VTLV), 101–121 (VLLL…VITP), 137–157 (PAFN…LFWV), 168–188 (FFGP…VAQI), 215–235 (FIIL…YADL), 247–267 (WFAV…ALLL), 285–305 (ALLP…QALI), 337–357 (IYLP…VMIF), 366–386 (AYGI…FFVI), 393–413 (PLWL…AFWA), and 419–439 (LFDG…LMIT).

This sequence belongs to the HAK/KUP transporter (TC 2.A.72) family.

It localises to the cell inner membrane. It catalyses the reaction K(+)(in) + H(+)(in) = K(+)(out) + H(+)(out). In terms of biological role, transport of potassium into the cell. Likely operates as a K(+):H(+) symporter. This chain is Probable potassium transport system protein Kup 1, found in Albidiferax ferrireducens (strain ATCC BAA-621 / DSM 15236 / T118) (Rhodoferax ferrireducens).